The primary structure comprises 404 residues: MKLPIYMDYSATTPADPRVAEKMMQYLTLDGTFGNPASRSHRFGWQAEEAVDVARNNIAELVGSDPREIVFTSGATEADNLAIKGAANFYQKKGKHIITCKTEHKAVLDTCRQLEREGFEVTYMTPQPNGLIDLNALEAVMRDDTILVSIMHVNNEIGIIQDIETIGEMCHARGIIFHVDATQSVGKLPIDLSKLKVDLMSFSGHKIYGPKGIGALYVRRKPRVRIEAQMHGGGHERGMRSGTLPVHQIVGMGEAYRIAKEEMSTEVLRLRVLRDRLWNGLKDIEEVYLNGALEQGAPNILNVSFNFVEGESLIMALKDLAVSSGSACTSASLEPSYVLRALGLNDELAHSSIRFSLGRFTTEEEVDYAIDLVRKSIGRLRELSPLWEMHKQGVDISTIEWSAH.

Pyridoxal 5'-phosphate-binding positions include 75-76, Asn-155, Gln-183, and 203-205; these read AT and SGH. At Lys-206 the chain carries N6-(pyridoxal phosphate)lysine. Thr-243 provides a ligand contact to pyridoxal 5'-phosphate. Cys-328 functions as the Cysteine persulfide intermediate in the catalytic mechanism. Cys-328 contributes to the [2Fe-2S] cluster binding site.

This sequence belongs to the class-V pyridoxal-phosphate-dependent aminotransferase family. NifS/IscS subfamily. As to quaternary structure, homodimer. Forms a heterotetramer with IscU, interacts with other sulfur acceptors. Pyridoxal 5'-phosphate is required as a cofactor.

It localises to the cytoplasm. The enzyme catalyses (sulfur carrier)-H + L-cysteine = (sulfur carrier)-SH + L-alanine. It functions in the pathway cofactor biosynthesis; iron-sulfur cluster biosynthesis. Its function is as follows. Master enzyme that delivers sulfur to a number of partners involved in Fe-S cluster assembly, tRNA modification or cofactor biosynthesis. Catalyzes the removal of elemental sulfur atoms from cysteine to produce alanine. Functions as a sulfur delivery protein for Fe-S cluster synthesis onto IscU, an Fe-S scaffold assembly protein, as well as other S acceptor proteins. The polypeptide is Cysteine desulfurase IscS (Edwardsiella ictaluri (strain 93-146)).